Consider the following 560-residue polypeptide: Probable sulfate transporter Rv1739c (560 aa).

Residues 1–436 (MIPTMTSAGW…VLGFVPGIAG (436 aa)) are required for sulfate transport in E.coli. The next 11 membrane-spanning stretches (helical) occupy residues 29–49 (VLAG…YATV), 51–71 (GLPP…YALL), 79–99 (IGPE…MAAG), 105–125 (AVLA…AGTA), 138–158 (VLVG…LGTI), 184–204 (WPTF…TRWA), 207–227 (APGP…MSLD), 256–276 (ALII…VLTA), 333–353 (LIAL…LAMF), 355–375 (IAAL…LSEF), and 394–414 (AAVL…LSIL). The region spanning 442-557 (DYPQAKRVPG…MTLPTAVQAF (116 aa)) is the STAS domain.

The protein belongs to the SLC26A/SulP transporter (TC 2.A.53) family.

It localises to the cell membrane. Its function is as follows. Expression in E.coli induces sulfate uptake during early- to mid-log phase growth. Uptake is maximal at pH 6.0, is sulfate-specific, requires E.coli CysA and the transmembrane segment but not the STAS domain of the protein. This chain is Probable sulfate transporter Rv1739c, found in Mycobacterium tuberculosis (strain ATCC 25618 / H37Rv).